Consider the following 239-residue polypeptide: Ribonuclease 3 (239 aa).

One can recognise an RNase III domain in the interval H11–D133. Mg(2+) is bound at residue E46. D50 is a catalytic residue. Residues D119 and E122 each contribute to the Mg(2+) site. The active site involves E122. Positions D160–E230 constitute a DRBM domain.

Belongs to the ribonuclease III family. In terms of assembly, homodimer. It depends on Mg(2+) as a cofactor.

It localises to the cytoplasm. It catalyses the reaction Endonucleolytic cleavage to 5'-phosphomonoester.. Functionally, digests double-stranded RNA. Involved in the processing of primary rRNA transcript to yield the immediate precursors to the large and small rRNAs (23S and 16S). Processes some mRNAs, and tRNAs when they are encoded in the rRNA operon. Processes pre-crRNA and tracrRNA of type II CRISPR loci if present in the organism. The polypeptide is Ribonuclease 3 (Neisseria gonorrhoeae (strain ATCC 700825 / FA 1090)).